The sequence spans 201 residues: LexA repressor (201 aa).

The segment at residues 28 to 48 (LREIAAKLGISGTLGVMKHLE) is a DNA-binding region (H-T-H motif). Catalysis depends on for autocatalytic cleavage activity residues Ser120 and Lys157.

The protein belongs to the peptidase S24 family. As to quaternary structure, homodimer.

It catalyses the reaction Hydrolysis of Ala-|-Gly bond in repressor LexA.. In terms of biological role, represses a number of genes involved in the response to DNA damage (SOS response), including recA and lexA. In the presence of single-stranded DNA, RecA interacts with LexA causing an autocatalytic cleavage which disrupts the DNA-binding part of LexA, leading to derepression of the SOS regulon and eventually DNA repair. This chain is LexA repressor, found in Geobacter sp. (strain M21).